We begin with the raw amino-acid sequence, 441 residues long: Maltose-6'-phosphate glucosidase MalH (441 aa).

4-70 (FSVVIAGGGS…PEIEFLATTN (67 aa)) contacts NAD(+). 2 residues coordinate substrate: Arg93 and Asn147. A Mn(2+)-binding site is contributed by Cys169. Catalysis depends on Asp170, which acts as the Proton donor. Residue His200 participates in Mn(2+) binding. The active-site Proton acceptor is the Tyr264. Substrate is bound at residue Arg284.

Homotetramer. The cofactor is NAD(+). It depends on Mn(2+) as a cofactor.

It carries out the reaction alpha-maltose 6'-phosphate + H2O = D-glucose 6-phosphate + D-glucose. Functionally, catalyzes the hydrolysis of O-alpha-linked disaccharide 6-phosphates, including maltose-6'P and all five phosphorylated isomers of sucrose, but not sucrose-6P. Does not hydrolyze beta-linked disaccharide 6-phosphates such as cellobiose-6'P and gentiobiose-6'P. Is involved in the dissimilation of maltose and related O-alpha-linked glucosides produced via the phosphoenolpyruvate-dependent sugar phosphotransferase system (PEP-PTS). The protein is Maltose-6'-phosphate glucosidase MalH (malH) of Clostridium acetobutylicum (strain ATCC 824 / DSM 792 / JCM 1419 / IAM 19013 / LMG 5710 / NBRC 13948 / NRRL B-527 / VKM B-1787 / 2291 / W).